Reading from the N-terminus, the 196-residue chain is Signaling threshold-regulating transmembrane adapter 1 (196 aa).

A signal peptide spans 1 to 24 (MNQADPRLRAVCLWTLTSAAMSRG). The Extracellular segment spans residues 25–40 (DNCTDLLALGIPSITQ). Asparagine 26 carries an N-linked (GlcNAc...) asparagine glycan. The chain crosses the membrane as a helical span at residues 41–61 (AWGLWVLLGAVTLLFLISLAA). At 62–196 (HLSQWTRGRS…AYANSQPAAS (135 aa)) the chain is on the cytoplasmic side. 2 positions are modified to phosphoserine: serine 80 and serine 83. A Phosphotyrosine modification is found at tyrosine 90. The interval 90 to 93 (YGNL) is interaction with GRB2. Phosphoserine is present on serine 102. The residue at position 127 (tyrosine 127) is a Phosphotyrosine. Residues 132-167 (LRPPQGRIPGPGTPVKYSEVVLDSEPKSQASGPEPE) are disordered. At threonine 144 the chain carries Phosphothreonine. The tract at residues 146-151 (VKYSEV) is interaction with PTPN11. Phosphotyrosine occurs at positions 148 and 169. Residues 169–172 (YASV) are interaction with CSK. Phosphoserine is present on serine 182. Tyrosine 188 carries the phosphotyrosine modification. The tract at residues 188 to 191 (YANS) is interaction with GRB2.

Homodimer; disulfide-linked. When phosphorylated, interacts with PTPN11/SHP2, GRB2 and CSK. Phosphorylated on tyrosines by LCK, FYN or ZAP70 upon TCR activation; which leads to the recruitment of PTPN11, GRB2 and CSK. As to expression, specifically expressed in T- and B-cells. Present in plasma cells but not in germinal center B-cells (at protein level). Expressed in T- and B-cell lymphoma.

It localises to the cell membrane. Functionally, negatively regulates TCR (T-cell antigen receptor)-mediated signaling in T-cells. Involved in positive selection of T-cells. The sequence is that of Signaling threshold-regulating transmembrane adapter 1 (SIT1) from Homo sapiens (Human).